Consider the following 88-residue polypeptide: UPF0297 protein YrzL (88 aa).

This sequence belongs to the UPF0297 family.

The protein is UPF0297 protein YrzL (yrzL) of Bacillus subtilis (strain 168).